A 61-amino-acid polypeptide reads, in one-letter code: Large ribosomal subunit protein uL30 (61 aa).

It belongs to the universal ribosomal protein uL30 family. As to quaternary structure, part of the 50S ribosomal subunit.

The polypeptide is Large ribosomal subunit protein uL30 (Corynebacterium aurimucosum (strain ATCC 700975 / DSM 44827 / CIP 107346 / CN-1) (Corynebacterium nigricans)).